A 259-amino-acid chain; its full sequence is Phosphatidylglycerol--prolipoprotein diacylglyceryl transferase (259 aa).

Transmembrane regions (helical) follow at residues Ile-10–Tyr-30, Ile-50–Tyr-70, Trp-86–Phe-106, and Ile-112–Gly-132. Residue Arg-133 participates in a 1,2-diacyl-sn-glycero-3-phospho-(1'-sn-glycerol) binding. The next 3 helical transmembrane spans lie at Leu-169–Phe-189, Gly-197–Val-217, and Ile-227–Ile-247.

Belongs to the Lgt family.

It localises to the cell inner membrane. It catalyses the reaction L-cysteinyl-[prolipoprotein] + a 1,2-diacyl-sn-glycero-3-phospho-(1'-sn-glycerol) = an S-1,2-diacyl-sn-glyceryl-L-cysteinyl-[prolipoprotein] + sn-glycerol 1-phosphate + H(+). It participates in protein modification; lipoprotein biosynthesis (diacylglyceryl transfer). Catalyzes the transfer of the diacylglyceryl group from phosphatidylglycerol to the sulfhydryl group of the N-terminal cysteine of a prolipoprotein, the first step in the formation of mature lipoproteins. This Ehrlichia ruminantium (strain Gardel) protein is Phosphatidylglycerol--prolipoprotein diacylglyceryl transferase.